Here is a 352-residue protein sequence, read N- to C-terminus: Holliday junction branch migration complex subunit RuvB (352 aa).

The interval 4-185 (PDRLISAVSG…FGIVQRLEFY (182 aa)) is large ATPase domain (RuvB-L). Residues Ile-24, Arg-25, Gly-66, Lys-69, Thr-70, Thr-71, 132 to 134 (EDF), Arg-175, Tyr-185, and Arg-222 each bind ATP. Thr-70 is a binding site for Mg(2+). Positions 186–256 (NVEDLATIVS…IADKALNLLD (71 aa)) are small ATPAse domain (RuvB-S). The tract at residues 259–352 (ERGFDHLDRR…TDLFTSEDGN (94 aa)) is head domain (RuvB-H). Positions 295, 314, and 319 each coordinate DNA.

Belongs to the RuvB family. Homohexamer. Forms an RuvA(8)-RuvB(12)-Holliday junction (HJ) complex. HJ DNA is sandwiched between 2 RuvA tetramers; dsDNA enters through RuvA and exits via RuvB. An RuvB hexamer assembles on each DNA strand where it exits the tetramer. Each RuvB hexamer is contacted by two RuvA subunits (via domain III) on 2 adjacent RuvB subunits; this complex drives branch migration. In the full resolvosome a probable DNA-RuvA(4)-RuvB(12)-RuvC(2) complex forms which resolves the HJ.

It is found in the cytoplasm. It carries out the reaction ATP + H2O = ADP + phosphate + H(+). Its function is as follows. The RuvA-RuvB-RuvC complex processes Holliday junction (HJ) DNA during genetic recombination and DNA repair, while the RuvA-RuvB complex plays an important role in the rescue of blocked DNA replication forks via replication fork reversal (RFR). RuvA specifically binds to HJ cruciform DNA, conferring on it an open structure. The RuvB hexamer acts as an ATP-dependent pump, pulling dsDNA into and through the RuvAB complex. RuvB forms 2 homohexamers on either side of HJ DNA bound by 1 or 2 RuvA tetramers; 4 subunits per hexamer contact DNA at a time. Coordinated motions by a converter formed by DNA-disengaged RuvB subunits stimulates ATP hydrolysis and nucleotide exchange. Immobilization of the converter enables RuvB to convert the ATP-contained energy into a lever motion, pulling 2 nucleotides of DNA out of the RuvA tetramer per ATP hydrolyzed, thus driving DNA branch migration. The RuvB motors rotate together with the DNA substrate, which together with the progressing nucleotide cycle form the mechanistic basis for DNA recombination by continuous HJ branch migration. Branch migration allows RuvC to scan DNA until it finds its consensus sequence, where it cleaves and resolves cruciform DNA. This is Holliday junction branch migration complex subunit RuvB from Pseudomonas aeruginosa (strain LESB58).